Here is a 295-residue protein sequence, read N- to C-terminus: MHPDLLPHLRCPVCGQPLHQADAAPPRALRCPAGHSFDIARQGYVNLLTGRAPHVGDTAEMIAAREEFLAAGHYDPFSAALATAAARAVPRRVRPGDGVGEPVAYPDLVVDAGAGTGRHLAAVLDAVPTAVGLALDVSKPALRRAARAHPRAGAAVCDTWGRLPLADATVAVLVNVFAPRNGPEFRRVLRPDGALLVVTPTAEHLVELVDRLGLLRVDPAKDARVADSLTRHFEPAGQSTHRHRLQLTRKEVLTLVGMGPSAWHTDPARLTARVAALSEPVTVTAAVRLARYRPI.

Residues C11, C14, C31, and H35 each coordinate Zn(2+). Residues Y74, 116 to 117 (TG), and H204 each bind S-adenosyl-L-methionine.

It belongs to the methyltransferase superfamily. RlmA family.

Functionally, confers strong resistance to mycinamicin (MM) and tylosin (TY). May function as methyltransferase. The polypeptide is Putative 23S rRNA (guanine-N(1)-)-methyltransferase (myrA) (Micromonospora griseorubida).